We begin with the raw amino-acid sequence, 401 residues long: S-adenosylmethionine synthase (401 aa).

An ATP-binding site is contributed by His-16. Asp-18 contacts Mg(2+). Glu-44 is a K(+) binding site. The L-methionine site is built by Glu-57 and Gln-100. The tract at residues 100–110 (QSPDIAQGVNE) is flexible loop. ATP is bound by residues 174–176 (DAK), 241–242 (RF), Asp-250, 256–257 (RK), Ala-273, and Lys-277. Asp-250 contacts L-methionine. Residue Lys-281 participates in L-methionine binding.

The protein belongs to the AdoMet synthase family. In terms of assembly, homotetramer; dimer of dimers. Mg(2+) is required as a cofactor. It depends on K(+) as a cofactor.

It localises to the cytoplasm. The catalysed reaction is L-methionine + ATP + H2O = S-adenosyl-L-methionine + phosphate + diphosphate. It functions in the pathway amino-acid biosynthesis; S-adenosyl-L-methionine biosynthesis; S-adenosyl-L-methionine from L-methionine: step 1/1. In terms of biological role, catalyzes the formation of S-adenosylmethionine (AdoMet) from methionine and ATP. The overall synthetic reaction is composed of two sequential steps, AdoMet formation and the subsequent tripolyphosphate hydrolysis which occurs prior to release of AdoMet from the enzyme. The sequence is that of S-adenosylmethionine synthase from Streptococcus equi subsp. zooepidemicus (strain H70).